The sequence spans 504 residues: MSGRIKTAGRALASQCGGAAAATMDPYDAIEAFDDSLLGSPLAAGPLYDGPSPARFALPPPRPAPLAALLERMQAELGFPDGPALLRAMERWNEDLFSCLPTNADLYADAALLSADADAVVGAMYLAVPGDAERLDLNAHANQPLPAPPASEEGLPEYVAGVQAHFLAELRAREERYAGLFLGYCRALLQHLRATAARGRGAAGAGAQADRLRQLVAARYYREASRLARLAFAHMYVATAREVSWRLHSQQSQAQGVFVSLYYAWPQRRQFTCLFHPVLFNHGVVALEDGFLDAAELRRLNYRRRELGLPLVRAGLVEVEVGPLVEEPPFSGSLPRALGFLNYQVRAKMGAPAEAGGGWRRSGSTRTRGRAARSTTGRLQRPCCGPRRRAKCCRATPRQRLRARGEPRHTSGSGAFSQGRRPGRVCRLGWACKARSGPARGGPGPSPVRSGLGLSRARGSPGPGPACGGPSRARGGRRRASPANPFGGTYDALLGDRLNQLLDF.

3 disordered regions span residues 354 to 381 (EAGGGWRRSGSTRTRGRAARSTTGRLQR), 395 to 421 (ATPRQRLRARGEPRHTSGSGAFSQGRR), and 435 to 486 (RSGP…ANPF). The segment covering 361–378 (RSGSTRTRGRAARSTTGR) has biased composition (low complexity). Positions 447 to 460 (PVRSGLGLSRARGS) are enriched in low complexity.

It belongs to the herpesviridae tegument protein VP16 protein family. In terms of assembly, associates with the VP16-induced complex; binding to host HCFC1 activates VP16 for association with the octamer motif-binding host protein POU2F1, to form a multiprotein-DNA complex responsible for activating transcription of the viral immediate early genes.

The protein localises to the virion tegument. Its subcellular location is the host nucleus. In terms of biological role, transcriptional activator of immediate-early (IE) gene products (alpha genes). Acts as a key activator of lytic infection by initiating the lytic program through the assembly of the transcriptional regulatory VP16-induced complex composed of VP16 and two cellular factors, HCFC1 and POU2F1. VP16-induced complex represents a regulatory switch: when it is on, it promotes IE-gene expression and thus lytic infection, and when it is off, it limits IE-gene transcription favoring latent infection. Functionally, may play a role in the aggregation of tegument proteins around nucleocapsids during virus morphogenesis. The protein is Tegument protein VP16 homolog of Bos taurus (Bovine).